The following is a 464-amino-acid chain: Keratin, type I cytoskeletal 28 (464 aa).

The head stretch occupies residues 1 to 85 (MSLRFSSGSR…GSEGGLFSGN (85 aa)). The interval 86 to 121 (EKVTMQNLNDRLASYLDNVRALEEANAELERKIKSW) is coil 1A. An IF rod domain is found at 86–401 (EKVTMQNLND…RLIDGDRNSC (316 aa)). Residues 122–143 (YEKHGPGSCHGLDHDYSRYHLT) form a linker 1 region. The coil 1B stretch occupies residues 144–235 (IEDLKNKIIS…KNHEEEVKAL (92 aa)). The linker 12 stretch occupies residues 236–258 (QCVAGGNVNVEMNAAPGVDLTLL). The tract at residues 259 to 397 (LNNMRAEYED…ETYCRLIDGD (139 aa)) is coil 2. The tail stretch occupies residues 398 to 464 (RNSCSKSKGF…NGKTKQRVPF (67 aa)). Positions 402–417 (SKSKGFGSGSPGNSSK) are enriched in low complexity. 2 disordered regions span residues 402-422 (SKSK…LSRT) and 440-464 (SSRV…RVPF).

Belongs to the intermediate filament family. In terms of assembly, heterotetramer of two type I and two type II keratins.

The protein localises to the cytoplasm. Essential for the proper assembly of types I and II keratin protein complexes and the formation of keratin intermediate filaments in the inner root sheath (irs). The polypeptide is Keratin, type I cytoskeletal 28 (Bos taurus (Bovine)).